A 91-amino-acid polypeptide reads, in one-letter code: UPF0147 protein APE_2336a (91 aa).

Belongs to the UPF0147 family.

The protein is UPF0147 protein APE_2336a of Aeropyrum pernix (strain ATCC 700893 / DSM 11879 / JCM 9820 / NBRC 100138 / K1).